Here is an 873-residue protein sequence, read N- to C-terminus: DNA mismatch repair protein MutS (873 aa).

The disordered stretch occupies residues 1-34; that stretch reads MAAIPTPRLHRGVTHLSRQTKSRARHPMSTPQHT. A compositionally biased stretch (basic residues) spans 8 to 26; it reads RLHRGVTHLSRQTKSRARH. 635-642 serves as a coordination point for ATP; the sequence is GPNMGGKS.

The protein belongs to the DNA mismatch repair MutS family.

Its function is as follows. This protein is involved in the repair of mismatches in DNA. It is possible that it carries out the mismatch recognition step. This protein has a weak ATPase activity. This is DNA mismatch repair protein MutS from Chromobacterium violaceum (strain ATCC 12472 / DSM 30191 / JCM 1249 / CCUG 213 / NBRC 12614 / NCIMB 9131 / NCTC 9757 / MK).